We begin with the raw amino-acid sequence, 211 residues long: Redox-sensing transcriptional repressor Rex (211 aa).

Positions 17-56 (LYYRLVSILKGKGIDRVNSKTISEALQIDSATIRRDFSYF) form a DNA-binding region, H-T-H motif. 91–96 (GIGNLG) serves as a coordination point for NAD(+).

It belongs to the transcriptional regulatory Rex family. As to quaternary structure, homodimer.

Its subcellular location is the cytoplasm. Modulates transcription in response to changes in cellular NADH/NAD(+) redox state. The protein is Redox-sensing transcriptional repressor Rex of Staphylococcus epidermidis (strain ATCC 12228 / FDA PCI 1200).